Reading from the N-terminus, the 857-residue chain is Putative disease resistance protein At1g50180 (857 aa).

Residues 27 to 60 (IGDQVKQLQDELKRLNCFLKDADEKQHESERVRN) are a coiled coil. The NB-ARC domain occupies 148-461 (SLREQRQSFP…AEGMVMPVKH (314 aa)). 192–199 (GMGGLGKT) provides a ligand contact to ATP. LRR repeat units lie at residues 653 to 678 (MTSL…SLSK), 680 to 703 (LKRL…DVTQ), 754 to 780 (LPNL…NLEN), and 791 to 816 (MMRL…RFLK).

Belongs to the disease resistance NB-LRR family.

Potential disease resistance protein. The chain is Putative disease resistance protein At1g50180 from Arabidopsis thaliana (Mouse-ear cress).